A 492-amino-acid polypeptide reads, in one-letter code: Probable cytochrome P450 516B1 (492 aa).

The helical transmembrane segment at 1-17 (MYLILSLIIFLAYVAFH) threads the bilayer. Cys-438 is a binding site for heme.

Belongs to the cytochrome P450 family. The cofactor is heme.

It is found in the membrane. This is Probable cytochrome P450 516B1 (cyp516B1) from Dictyostelium discoideum (Social amoeba).